Consider the following 146-residue polypeptide: MORN repeat-containing protein 4 (146 aa).

MORN repeat units lie at residues 16 to 38 (YRGE…DGGT), 39 to 61 (YLGH…DGSR), 62 to 84 (YEGE…DNMT), and 85 to 107 (FEGE…DGSH).

Interacts with MYO3A.

It localises to the cytoplasm. The protein resides in the cell projection. Its subcellular location is the filopodium tip. The protein localises to the stereocilium. Its function is as follows. Plays a role in promoting axonal degeneration following neuronal injury by toxic insult or trauma. The sequence is that of MORN repeat-containing protein 4 (Morn4) from Rattus norvegicus (Rat).